We begin with the raw amino-acid sequence, 336 residues long: Protein ABHD13 (336 aa).

The chain crosses the membrane as a helical; Signal-anchor for type II membrane protein span at residues 37-57; sequence FNMYGGVILLLLIFVSIAGIL. Active-site charge relay system residues include S193, D268, and H298. N299 carries an N-linked (GlcNAc...) asparagine glycan.

The protein belongs to the serine esterase family.

It localises to the membrane. The protein is Protein ABHD13 of Xenopus laevis (African clawed frog).